A 142-amino-acid chain; its full sequence is Putative arsenate reductase (142 aa).

Belongs to the low molecular weight phosphotyrosine protein phosphatase family.

In terms of biological role, reduces arsenate [As(V)] to arsenite [As(III)]. The sequence is that of Putative arsenate reductase (arsC) from Halobacterium salinarum (strain ATCC 700922 / JCM 11081 / NRC-1) (Halobacterium halobium).